We begin with the raw amino-acid sequence, 312 residues long: Apolipoprotein E (312 aa).

Residues 1–18 form the signal peptide; the sequence is MKALWAVLLATLLTGCLA. 8 repeat units span residues 72–93, 94–115, 116–137, 138–159, 160–181, 182–203, 204–225, and 226–247. The 8 X 22 AA approximate tandem repeats stretch occupies residues 72 to 247; that stretch reads VLMEDTMTEV…RLEEMREHME (176 aa). M135 is modified (methionine sulfoxide). Residues 150-160 form an LDL and other lipoprotein receptors binding region; sequence HLRKMRKRLMR. The segment at 150 to 160 is LDL receptor binding; that stretch reads HLRKMRKRLMR. 154-157 provides a ligand contact to heparin; that stretch reads MRKR. The segment at 202-282 is lipid-binding and lipoprotein association; sequence TANLGAGAAQ…SWFEPLVEDM (81 aa). 221 to 228 serves as a coordination point for heparin; it reads SERLRGRL. A homooligomerization region spans residues 258–312; sequence QQIRLQAEIFQARLKSWFEPLVEDMHRQLANLVEKIQSSVATNSVLSTSVPQENQ. The segment at 270 to 282 is specificity for association with VLDL; that stretch reads RLKSWFEPLVEDM.

This sequence belongs to the apolipoprotein A1/A4/E family. In terms of assembly, homotetramer. May interact with ABCA1; functionally associated with ABCA1 in the biogenesis of HDLs. May interact with APP/A4 amyloid-beta peptide; the interaction is extremely stable in vitro but its physiological significance is unclear. May interact with MAPT. May interact with MAP2. In the cerebrospinal fluid, interacts with secreted SORL1. Interacts with PMEL; this allows the loading of PMEL luminal fragment on ILVs to induce fibril nucleation. Post-translationally, APOE exists as multiple glycosylated and sialylated glycoforms within cells and in plasma. The extent of glycosylation and sialylation are tissue and context specific. In terms of processing, glycated in plasma VLDL. Phosphorylated by FAM20C in the extracellular medium.

It localises to the secreted. It is found in the extracellular space. The protein resides in the extracellular matrix. The protein localises to the extracellular vesicle. Its subcellular location is the endosome. It localises to the multivesicular body. Functionally, APOE is an apolipoprotein, a protein associating with lipid particles, that mainly functions in lipoprotein-mediated lipid transport between organs via the plasma and interstitial fluids. APOE is a core component of plasma lipoproteins and is involved in their production, conversion and clearance. Apolipoproteins are amphipathic molecules that interact both with lipids of the lipoprotein particle core and the aqueous environment of the plasma. As such, APOE associates with chylomicrons, chylomicron remnants, very low density lipoproteins (VLDL) and intermediate density lipoproteins (IDL) but shows a preferential binding to high-density lipoproteins (HDL). It also binds a wide range of cellular receptors including the LDL receptor/LDLR, the LDL receptor-related proteins LRP1, LRP2 and LRP8 and the very low-density lipoprotein receptor/VLDLR that mediate the cellular uptake of the APOE-containing lipoprotein particles. Finally, APOE also has a heparin-binding activity and binds heparan-sulfate proteoglycans on the surface of cells, a property that supports the capture and the receptor-mediated uptake of APOE-containing lipoproteins by cells. A main function of APOE is to mediate lipoprotein clearance through the uptake of chylomicrons, VLDLs, and HDLs by hepatocytes. APOE is also involved in the biosynthesis by the liver of VLDLs as well as their uptake by peripheral tissues ensuring the delivery of triglycerides and energy storage in muscle, heart and adipose tissues. By participating in the lipoprotein-mediated distribution of lipids among tissues, APOE plays a critical role in plasma and tissues lipid homeostasis. APOE is also involved in two steps of reverse cholesterol transport, the HDLs-mediated transport of cholesterol from peripheral tissues to the liver, and thereby plays an important role in cholesterol homeostasis. First, it is functionally associated with ABCA1 in the biogenesis of HDLs in tissues. Second, it is enriched in circulating HDLs and mediates their uptake by hepatocytes. APOE also plays an important role in lipid transport in the central nervous system, regulating neuron survival and sprouting. This chain is Apolipoprotein E (Apoe), found in Arvicanthis niloticus (African grass rat).